The primary structure comprises 210 residues: Dephospho-CoA kinase (210 aa).

Residues 4-202 enclose the DPCK domain; the sequence is WVGLTGGIGS…AFYSGIFASK (199 aa). Position 12–17 (12–17) interacts with ATP; sequence GSGKSA.

This sequence belongs to the CoaE family.

The protein localises to the cytoplasm. The enzyme catalyses 3'-dephospho-CoA + ATP = ADP + CoA + H(+). The protein operates within cofactor biosynthesis; coenzyme A biosynthesis; CoA from (R)-pantothenate: step 5/5. Functionally, catalyzes the phosphorylation of the 3'-hydroxyl group of dephosphocoenzyme A to form coenzyme A. The polypeptide is Dephospho-CoA kinase (Neisseria gonorrhoeae (strain ATCC 700825 / FA 1090)).